The chain runs to 266 residues: Hydroxyethylthiazole kinase (266 aa).

Met39 provides a ligand contact to substrate. Lys115 and Thr160 together coordinate ATP. Residue Gly187 coordinates substrate.

The protein belongs to the Thz kinase family. Mg(2+) is required as a cofactor.

The enzyme catalyses 5-(2-hydroxyethyl)-4-methylthiazole + ATP = 4-methyl-5-(2-phosphooxyethyl)-thiazole + ADP + H(+). The protein operates within cofactor biosynthesis; thiamine diphosphate biosynthesis; 4-methyl-5-(2-phosphoethyl)-thiazole from 5-(2-hydroxyethyl)-4-methylthiazole: step 1/1. Its function is as follows. Catalyzes the phosphorylation of the hydroxyl group of 4-methyl-5-beta-hydroxyethylthiazole (THZ). This Staphylococcus aureus (strain MSSA476) protein is Hydroxyethylthiazole kinase.